The chain runs to 102 residues: Small ribosomal subunit protein eS24 (102 aa).

The protein belongs to the eukaryotic ribosomal protein eS24 family.

The protein is Small ribosomal subunit protein eS24 of Halorubrum lacusprofundi (strain ATCC 49239 / DSM 5036 / JCM 8891 / ACAM 34).